A 388-amino-acid polypeptide reads, in one-letter code: MEKKAVHFGGGNIGRGFVAEFLHTAGYEVVFVDVMDSIITALQNTKSYEVTEVSDEGEATKTITNYRAINSKTHESDVINEISTATVVTCAVGPNILKFIAPAIAKGIDARTAATPLAVIACENAIGATDTLHHFIKDNTAQDRLGSMPDRARFANSAIDRIVPGQAADSGLNVRIEKFYEWAVESTPFGEFGHPDIPAIHWVSDLEPYIERKLFTVNTGHATAAYYGYNAGKKTIAEALHDSRIRGIVRDVLQETASLIIDKHEISAAEQQEYVETIITRISNPYLEDTVERVGRAPMRKVSRKERFIGPASQLAERGGKFQSLLGSLEMALRFQNVEGDEESVELAKILKENAPADAAVRLTGLDRDHPLFPHVVKVVDGVQSDAK.

5–16 is an NAD(+) binding site; it reads AVHFGGGNIGRG. The active site involves Lys213.

The protein belongs to the mannitol dehydrogenase family. Monomer.

The enzyme catalyses D-mannitol 1-phosphate + NAD(+) = beta-D-fructose 6-phosphate + NADH + H(+). Functionally, catalyzes the NAD(H)-dependent interconversion of D-fructose 6-phosphate and D-mannitol 1-phosphate in the mannitol metabolic pathway. The polypeptide is Mannitol-1-phosphate 5-dehydrogenase (Penicillium rubens (strain ATCC 28089 / DSM 1075 / NRRL 1951 / Wisconsin 54-1255) (Penicillium chrysogenum)).